A 222-amino-acid polypeptide reads, in one-letter code: Octanoyltransferase (222 aa).

In terms of domain architecture, BPL/LPL catalytic spans 34 to 214 (GEKNSTVLIL…EFSKHDEALV (181 aa)). Residues 72-79 (RGGKLTWH), 144-146 (AIG), and 157-159 (GVA) each bind substrate. Residue Cys175 is the Acyl-thioester intermediate of the active site.

Belongs to the LipB family.

The protein localises to the cytoplasm. The catalysed reaction is octanoyl-[ACP] + L-lysyl-[protein] = N(6)-octanoyl-L-lysyl-[protein] + holo-[ACP] + H(+). It functions in the pathway protein modification; protein lipoylation via endogenous pathway; protein N(6)-(lipoyl)lysine from octanoyl-[acyl-carrier-protein]: step 1/2. Its function is as follows. Catalyzes the transfer of endogenously produced octanoic acid from octanoyl-acyl-carrier-protein onto the lipoyl domains of lipoate-dependent enzymes. Lipoyl-ACP can also act as a substrate although octanoyl-ACP is likely to be the physiological substrate. This chain is Octanoyltransferase, found in Paenarthrobacter aurescens (strain TC1).